The following is a 212-amino-acid chain: MAASSAVTANYVLKPPPFALDALEPHMSKQTLEFHWGKHHRAYVDNLKKQVLGTELEGKPLEHIIHSTYNNGDLLPAFNNAAQAWNHEFFWESMKPGGGGKPSGELLALLERDFTSYEKFYEEFNAAAATQFGAGWAWLAYSNEKLKVVKTPNAVNPLVLGSFPLLTIDVWEHAYYLDFQNRRPDYIKTFMTNLVSWEAVSARLEAAKAASA.

Position 2 is an N-acetylalanine (Ala2). Fe cation-binding residues include His35, His87, Asp169, and His173.

It belongs to the iron/manganese superoxide dismutase family. In terms of assembly, homodimer. Interacts with cpn20/cpn21. It depends on Fe cation as a cofactor.

Its subcellular location is the cell membrane. The protein localises to the plastid. It localises to the chloroplast membrane. The protein resides in the chloroplast stroma. The enzyme catalyses 2 superoxide + 2 H(+) = H2O2 + O2. Activated by cpn20/cpn21. In terms of biological role, destroys superoxide anion radicals which are normally produced within the cells and which are toxic to biological systems. The polypeptide is Superoxide dismutase [Fe] 1, chloroplastic (FSD1) (Arabidopsis thaliana (Mouse-ear cress)).